We begin with the raw amino-acid sequence, 476 residues long: MADKTDIISSSSDKASPPPPSAFRNYLSSGSKEPVLLLESAGKESCCIFRVPESFVALNPKAYKPKVVSIGPYHYGEKHLQMIQQHKPRLLQLFLDEAKKKDVEENVLVKAVVDLEDKIRKSYSEELKTGHDLMFMMVLDGCFILMVFLIMSGNIELSEDPIFSIPWLLSSIQSDLLLLENQVPFFVLQTLYVGSKIGVSSDLNRIAFHFFKNPIDKEGSYWEKHRNYKAKHLLDLIRETFLPNTSESDKASSPHVQVQLHEGKSGNVPSVDSKAVPLILSAKRLRLQGIKFRLRRSKEDSILNVRLKKNKLQIPQLRFDGFISSFFLNCVAFEQFYTDSSNEITTYIVFMGCLLNNEEDVTFLRNDKLIIENHFGSNNEVSEFFKTISKDVVFEVDTSYLNNVFKGVNEYTKKWYNGLWAGFRHTHFESPWTFLSSCAVLFVILLTMLQSTVAILSYLNDKKGNGNAAPPPLGLP.

The segment at 1–24 (MADKTDIISSSSDKASPPPPSAFR) is disordered. 2 helical membrane-spanning segments follow: residues 133 to 153 (LMFMMVLDGCFILMVFLIMSG) and 439 to 459 (AVLFVILLTMLQSTVAILSYL).

This sequence belongs to the UPF0481 family.

It localises to the membrane. The chain is UPF0481 protein At3g47200 from Arabidopsis thaliana (Mouse-ear cress).